The sequence spans 1403 residues: DNA-directed RNA polymerase subunit beta' (1403 aa).

Zn(2+) is bound by residues Cys71, Cys73, Cys86, and Cys89. Asp462, Asp464, and Asp466 together coordinate Mg(2+). Zn(2+) contacts are provided by Cys811, Cys885, Cys892, and Cys895.

It belongs to the RNA polymerase beta' chain family. The RNAP catalytic core consists of 2 alpha, 1 beta, 1 beta' and 1 omega subunit. When a sigma factor is associated with the core the holoenzyme is formed, which can initiate transcription. Mg(2+) is required as a cofactor. The cofactor is Zn(2+).

The catalysed reaction is RNA(n) + a ribonucleoside 5'-triphosphate = RNA(n+1) + diphosphate. DNA-dependent RNA polymerase catalyzes the transcription of DNA into RNA using the four ribonucleoside triphosphates as substrates. This Bartonella bacilliformis (strain ATCC 35685 / KC583 / Herrer 020/F12,63) protein is DNA-directed RNA polymerase subunit beta'.